The primary structure comprises 445 residues: Phosphoglucosamine mutase (445 aa).

S102 (phosphoserine intermediate) is an active-site residue. 4 residues coordinate Mg(2+): S102, D241, D243, and D245. S102 is modified (phosphoserine).

Belongs to the phosphohexose mutase family. Requires Mg(2+) as cofactor. Post-translationally, activated by phosphorylation.

The enzyme catalyses alpha-D-glucosamine 1-phosphate = D-glucosamine 6-phosphate. Catalyzes the conversion of glucosamine-6-phosphate to glucosamine-1-phosphate. The chain is Phosphoglucosamine mutase from Hahella chejuensis (strain KCTC 2396).